Here is a 658-residue protein sequence, read N- to C-terminus: A-type ATP synthase subunit I (658 aa).

7 helical membrane passes run 383-403 (MAFVFPFFFGFCLTDAGYGII), 427-447 (IIMMSCGVWAFILGMVTNGFI), 475-495 (ILIMALTVGVLHINFGLILGA), 507-526 (ALGSQIVWLILELGIILYLV), 530-552 (IFGAPLIILAFAMLLYYNGLFGL), 568-588 (LLALCLSTGGIAMTVNILTGL), and 591-611 (EMIPVIGVVLAPIIFVFGHIA).

Belongs to the V-ATPase 116 kDa subunit family. As to quaternary structure, has multiple subunits with at least A(3), B(3), C, D, E, F, H, I and proteolipid K(x).

Its subcellular location is the cell membrane. Functionally, component of the A-type ATP synthase that produces ATP from ADP in the presence of a proton gradient across the membrane. The chain is A-type ATP synthase subunit I from Methanothermobacter thermautotrophicus (strain ATCC 29096 / DSM 1053 / JCM 10044 / NBRC 100330 / Delta H) (Methanobacterium thermoautotrophicum).